A 344-amino-acid chain; its full sequence is MVEKEEAVISEEEAAQYDRQIRLWGLEAQKRLRTSRVLLVGMRGLGAEVAKNLILAGVKALTLLDHEQVSSEDSRAQFLIPSGSLGQNRAEASLNRARNLNPMVSVEADTENINQKSDDFFTQFDVVCLTSCPSDLLVRVNHICHKHNIKFFTGDVYGYHGSMFADLGEHEFVEEKAKVTKAKPLVEDGPEAKKAKIDPTETILVKKKVQFCPLKDALEIDWRSEKAKSALKKTPTDYFLLQVLMKFRTDKGRDPQPSSYQEDSELLLQICSDVLDSLGVSPDLLPKDFASYCFSEMAPVCAVVGGVLGQEIVKALSLRDAPHNNFFFFDGKTSNGIVDCLGSK.

The protein belongs to the ubiquitin-activating E1 family. In terms of assembly, heterodimer of sae1 and uba2/sae2. The heterodimer corresponds to the two domains that are encoded on a single polypeptide chain in ubiquitin-activating enzyme E1. Interacts with ube2i.

The protein resides in the nucleus. Its pathway is protein modification; protein sumoylation. Its function is as follows. The heterodimer acts as an E1 ligase for sumo1, sumo2, and sumo3. It mediates ATP-dependent activation of sumo proteins followed by formation of a thioester bond between a sumo protein and a conserved active site cysteine residue on uba2/sae2. The sequence is that of SUMO-activating enzyme subunit 1 (sae1) from Xenopus laevis (African clawed frog).